A 177-amino-acid chain; its full sequence is Alkyl hydroperoxide reductase AhpD (177 aa).

The active-site Proton donor is the C130. C130 and C133 are joined by a disulfide. Catalysis depends on C133, which acts as the Cysteine sulfenic acid (-SOH) intermediate.

This sequence belongs to the AhpD family. As to quaternary structure, homotrimer.

It carries out the reaction N(6)-[(R)-dihydrolipoyl]-L-lysyl-[lipoyl-carrier protein] + a hydroperoxide = N(6)-[(R)-lipoyl]-L-lysyl-[lipoyl-carrier protein] + an alcohol + H2O. Antioxidant protein with alkyl hydroperoxidase activity. Required for the reduction of the AhpC active site cysteine residues and for the regeneration of the AhpC enzyme activity. The sequence is that of Alkyl hydroperoxide reductase AhpD from Corynebacterium aurimucosum (strain ATCC 700975 / DSM 44827 / CIP 107346 / CN-1) (Corynebacterium nigricans).